The following is a 311-amino-acid chain: Lipid A biosynthesis acyltransferase (311 aa).

Residues 19–39 form a helical membrane-spanning segment; it reads WLFWLGVAIWRSILCLPYPIL. Positions 134–139 match the HXXXXD motif motif; it reads HFLTLE.

The protein belongs to the LpxL/LpxM/LpxP family.

The protein localises to the cell inner membrane. The enzyme catalyses an alpha-Kdo-(2-&gt;4)-alpha-Kdo-(2-&gt;6)-lipid IVA + a fatty acyl-[ACP] = an alpha-Kdo-(2-&gt;4)-alpha-Kdo-(2-&gt;6)-(acyl)-lipid IVA + holo-[ACP]. Its pathway is glycolipid biosynthesis; KDO(2)-lipid A biosynthesis; KDO(2)-lipid A from CMP-3-deoxy-D-manno-octulosonate and lipid IV(A): step 3/4. It participates in bacterial outer membrane biogenesis; lipopolysaccharide biosynthesis. In terms of biological role, catalyzes the transfer of an acyl chain from an acyl-[acyl-carrier-protein] (ACP) to a Kdo(2)-lipid IV(A) to form a Kdo(2)-(acyl)-lipid IV(A). This Haemophilus influenzae (strain ATCC 51907 / DSM 11121 / KW20 / Rd) protein is Lipid A biosynthesis acyltransferase.